Consider the following 438-residue polypeptide: Asparagine--tRNA ligase (438 aa).

Belongs to the class-II aminoacyl-tRNA synthetase family. As to quaternary structure, homodimer.

Its subcellular location is the cytoplasm. It carries out the reaction tRNA(Asn) + L-asparagine + ATP = L-asparaginyl-tRNA(Asn) + AMP + diphosphate + H(+). This Thermus thermophilus (strain ATCC BAA-163 / DSM 7039 / HB27) protein is Asparagine--tRNA ligase.